Reading from the N-terminus, the 914-residue chain is Effector protein hopAE1 (914 aa).

Residues 1-13 (MMPSQITRSSHSS) show a composition bias toward polar residues. The tract at residues 1–31 (MMPSQITRSSHSSLPEVAPASGDAAGVSEQT) is disordered.

This sequence belongs to the HopW family.

The protein localises to the secreted. The protein is Effector protein hopAE1 (hopAE1) of Pseudomonas syringae pv. syringae (strain B728a).